The sequence spans 169 residues: Lipoprotein signal peptidase (169 aa).

The next 2 helical transmembrane spans lie at 59-79 and 84-104; these read PTVL…YVIW and TTLF…NMID. Active-site residues include D113 and D139. A helical membrane pass occupies residues 132-152; it reads WPIFNIADSAITIGACMLMIF.

The protein belongs to the peptidase A8 family.

It localises to the cell inner membrane. It carries out the reaction Release of signal peptides from bacterial membrane prolipoproteins. Hydrolyzes -Xaa-Yaa-Zaa-|-(S,diacylglyceryl)Cys-, in which Xaa is hydrophobic (preferably Leu), and Yaa (Ala or Ser) and Zaa (Gly or Ala) have small, neutral side chains.. Its pathway is protein modification; lipoprotein biosynthesis (signal peptide cleavage). This protein specifically catalyzes the removal of signal peptides from prolipoproteins. This chain is Lipoprotein signal peptidase, found in Pelodictyon phaeoclathratiforme (strain DSM 5477 / BU-1).